The primary structure comprises 433 residues: Protein translocase subunit SecY (433 aa).

The next 10 membrane-spanning stretches (helical) occupy residues 17–37 (IIFT…PIAG), 71–91 (IFAL…LMSV), 117–137 (LTVL…ESIV), 141–161 (GPVV…TLVV), 184–204 (LIIF…MFEL), 212–232 (PLVA…IIFF), 268–288 (GVIP…LANF), 309–329 (IYIL…TAIV), 366–386 (LTVV…LLMN), and 388–408 (YVIS…VVLD).

This sequence belongs to the SecY/SEC61-alpha family. Component of the Sec protein translocase complex. Heterotrimer consisting of SecY, SecE and SecG subunits. The heterotrimers can form oligomers, although 1 heterotrimer is thought to be able to translocate proteins. Interacts with the ribosome. Interacts with SecDF, and other proteins may be involved. Interacts with SecA.

It is found in the cell inner membrane. In terms of biological role, the central subunit of the protein translocation channel SecYEG. Consists of two halves formed by TMs 1-5 and 6-10. These two domains form a lateral gate at the front which open onto the bilayer between TMs 2 and 7, and are clamped together by SecE at the back. The channel is closed by both a pore ring composed of hydrophobic SecY resides and a short helix (helix 2A) on the extracellular side of the membrane which forms a plug. The plug probably moves laterally to allow the channel to open. The ring and the pore may move independently. The sequence is that of Protein translocase subunit SecY from Rickettsia bellii (strain RML369-C).